Reading from the N-terminus, the 1049-residue chain is Self-sufficient cytochrome P450 monooxygenase CYP505E4 (1049 aa).

Position 405 (cysteine 405) interacts with heme. Polar residues predominate over residues 461–470 (SATALSQHNM). The tract at residues 461-491 (SATALSQHNMSAGATASPGSSTHLAGDENGQ) is disordered. The segment covering 471 to 482 (SAGATASPGSST) has biased composition (low complexity). The Flavodoxin-like domain maps to 499 to 640 (ISFFYGSNSG…DLEVWEETNL (142 aa)). FMN contacts are provided by residues 505 to 509 (SNSGT) and 584 to 616 (VFGCGHQDWTKTFYRIPILIDDLMHKAGATRLT). One can recognise an FAD-binding FR-type domain in the interval 678–906 (RDLVEGKVTA…RPAKDAFHLP (229 aa)).

It in the N-terminal section; belongs to the cytochrome P450 family. FAD is required as a cofactor. FMN serves as cofactor. Requires heme as cofactor.

It catalyses the reaction 2 oxidized [cytochrome P450] + NADPH = 2 reduced [cytochrome P450] + NADP(+) + H(+). The catalysed reaction is an organic molecule + reduced [NADPH--hemoprotein reductase] + O2 = an alcohol + oxidized [NADPH--hemoprotein reductase] + H2O + H(+). The enzyme catalyses dodecanoate + reduced [NADPH--hemoprotein reductase] + O2 = 5-hydroxydodecanoate + oxidized [NADPH--hemoprotein reductase] + H2O + H(+). It carries out the reaction dodecan-1-ol + reduced [NADPH--hemoprotein reductase] + O2 = 1,5-dodecanediol + oxidized [NADPH--hemoprotein reductase] + H2O + H(+). It catalyses the reaction dodecanoate + reduced [NADPH--hemoprotein reductase] + O2 = 9-hydroxydodecanoate + oxidized [NADPH--hemoprotein reductase] + H2O + H(+). The catalysed reaction is dodecan-1-ol + reduced [NADPH--hemoprotein reductase] + O2 = 1,4-dodecanediol + oxidized [NADPH--hemoprotein reductase] + H2O + H(+). The enzyme catalyses dodecan-1-ol + reduced [NADPH--hemoprotein reductase] + O2 = 1,6-dodecanediol + oxidized [NADPH--hemoprotein reductase] + H2O + H(+). Functionally, self-sufficient cytochrome P450 monooxygenase that catalyzes the regioselective in-chain hydroxylation of alkanes, fatty alcohols, and fatty acids at the omega-7 position. Performs hydroxylation of C10-C16 n-alkanes and C12 and C14 fatty alcohols; and thereby enables the one step biocatalytic synthesis of rare alcohols such as 5-dodecanol and 7-tetradecanol. Converts 1-dodecanol into 1,5-dodecanediol as major product with very little sub-terminally hydroxylated products with the 1,4-dodecanediol and 1,6-dodecanediol more abundant. Converts dodecanoic acid to 5-hydroxydodecanoic acid which can be further converted into delta-dodecalactone by lactonization of the 5-hydroxy acid at low pH. Also gives sub-terminal hydroxylation of dodecanoic acid with 9-hydroxydodecanoic acid being the second most abundant product. Does not show any significant activity toward tetradecanoic acid. This is Self-sufficient cytochrome P450 monooxygenase CYP505E4 from Penicillium camemberti (strain FM 013).